A 203-amino-acid polypeptide reads, in one-letter code: MSESEAPEPDQPAGAEEATGAKLFERWDVTGIEYDDPSTERYITVTPVEHTMGRHAGKQFQKSEISIVERLINRLMQTDENTGKKQQATRIVRNAFDLIAERTEESPVQVLVSAVENAAPREETVRLKYGGISVPQAVDVAPQRRVDQALKFIAEGTHSASFKSPTDAHEALAEQLTGAANYDVQTYAVNQKEEKERVAAAAR.

The disordered stretch occupies residues 1–22 (MSESEAPEPDQPAGAEEATGAK).

The protein belongs to the universal ribosomal protein uS7 family. In terms of assembly, part of the 30S ribosomal subunit.

Functionally, one of the primary rRNA binding proteins, it binds directly to 16S rRNA where it nucleates assembly of the head domain of the 30S subunit. Is located at the subunit interface close to the decoding center. The protein is Small ribosomal subunit protein uS7 of Halococcus morrhuae (Micrococcus morrhuae).